A 697-amino-acid chain; its full sequence is Elongation factor G 2 (697 aa).

A tr-type G domain is found at 5–280 (SKYRNIGIFA…AVVDYLPAPD (276 aa)). GTP contacts are provided by residues 14–21 (AHVDAGKT), 78–82 (DTPGH), and 132–135 (NKLD).

It belongs to the TRAFAC class translation factor GTPase superfamily. Classic translation factor GTPase family. EF-G/EF-2 subfamily.

It localises to the cytoplasm. Its function is as follows. Catalyzes the GTP-dependent ribosomal translocation step during translation elongation. During this step, the ribosome changes from the pre-translocational (PRE) to the post-translocational (POST) state as the newly formed A-site-bound peptidyl-tRNA and P-site-bound deacylated tRNA move to the P and E sites, respectively. Catalyzes the coordinated movement of the two tRNA molecules, the mRNA and conformational changes in the ribosome. The protein is Elongation factor G 2 (fusB) of Shewanella oneidensis (strain ATCC 700550 / JCM 31522 / CIP 106686 / LMG 19005 / NCIMB 14063 / MR-1).